A 171-amino-acid polypeptide reads, in one-letter code: UPF0312 protein SAV2687 (171 aa).

It belongs to the UPF0312 family.

This chain is UPF0312 protein SAV2687, found in Staphylococcus aureus (strain Mu50 / ATCC 700699).